The following is a 402-amino-acid chain: Phosphopentomutase (402 aa).

Mn(2+) contacts are provided by D10, D301, H306, D342, H343, and H354.

This sequence belongs to the phosphopentomutase family. Mn(2+) serves as cofactor.

It localises to the cytoplasm. The enzyme catalyses 2-deoxy-alpha-D-ribose 1-phosphate = 2-deoxy-D-ribose 5-phosphate. The catalysed reaction is alpha-D-ribose 1-phosphate = D-ribose 5-phosphate. It participates in carbohydrate degradation; 2-deoxy-D-ribose 1-phosphate degradation; D-glyceraldehyde 3-phosphate and acetaldehyde from 2-deoxy-alpha-D-ribose 1-phosphate: step 1/2. In terms of biological role, isomerase that catalyzes the conversion of deoxy-ribose 1-phosphate (dRib-1-P) and ribose 1-phosphate (Rib-1-P) to deoxy-ribose 5-phosphate (dRib-5-P) and ribose 5-phosphate (Rib-5-P), respectively. This is Phosphopentomutase from Aeromonas salmonicida (strain A449).